A 461-amino-acid chain; its full sequence is Argininosuccinate lyase (461 aa).

The protein belongs to the lyase 1 family. Argininosuccinate lyase subfamily.

It is found in the cytoplasm. It catalyses the reaction 2-(N(omega)-L-arginino)succinate = fumarate + L-arginine. The protein operates within amino-acid biosynthesis; L-arginine biosynthesis; L-arginine from L-ornithine and carbamoyl phosphate: step 3/3. This Laribacter hongkongensis (strain HLHK9) protein is Argininosuccinate lyase.